A 313-amino-acid polypeptide reads, in one-letter code: WD repeat-containing protein 82 (313 aa).

6 WD repeats span residues E19–T58, G105–L144, H146–F184, D192–T231, A236–V276, and K280–D313.

This sequence belongs to the WD repeat SWD2 family. As to quaternary structure, component of the SET1/COMPASS complex, at least composed of the catalytic subunit (SETD1A or SETD1B), WDR5, WDR82, RBBP5, ASH2L/ASH2, CXXC1/CFP1, HCFC1 and DPY30. Component of the PNUTS-PP1 phosphatase complex, composed of PPP1R10/PNUTS, TOX4, WDR82, and PPP1CA or PPP1CB or PPP1CC. Associated with multiple protein complexes including an RNA polymerase II complex, MLL3/MLL4 complex and a chaperonin-containing TCP1 complex. Interacts with SETD1B (via N-terminal region); the interaction is direct. Interacts with SETD1A (via N-terminal region); the interaction is direct. Interacts with CUL4B. Interacts with RBBP5. Interacts with POLR2B. Interacts with hyperphosphorylated C-terminal domain (CTD) of RNA polymerase II large subunit (POLR2A). Binds specifically to CTD heptad repeats phosphorylated on 'Ser-5' of each heptad. SETD1A enhances its interaction with POLR2A. Interacts with PPP1R10/PNUTS. Interacts with PPP1CA in the presence of PPP1R10/PNUTS. Interacts with ZC3H4; interaction is independent of the SET1 complex and promotes transcription termination of long non-coding RNAs (lncRNAs).

The protein localises to the nucleus. It is found in the chromosome. The protein resides in the cytoplasm. Regulatory component of the SET1/COMPASS complex implicated in the tethering of this complex to transcriptional start sites of active genes. Facilitates histone H3 'Lys-4' methylation (H3K4me) via recruitment of the SETD1A or SETD1B to the 'Ser-5' phosphorylated C-terminal domain (CTD) of RNA polymerase II large subunit (POLR2A). Component of the PNUTS-PP1 protein phosphatase complex, a protein phosphatase 1 (PP1) complex that promotes RNA polymerase II transcription pause-release, allowing transcription elongation. PNUTS-PP1 also plays a role in the control of chromatin structure and cell cycle progression during the transition from mitosis into interphase. Together with ZC3H4, but independently of the SET1 complex, part of a transcription termination checkpoint that promotes transcription termination of long non-coding RNAs (lncRNAs). The transcription termination checkpoint is activated by the inefficiently spliced first exon of lncRNAs and promotes transcription termination of lncRNAs and their subsequent degradation by the exosome. The sequence is that of WD repeat-containing protein 82 from Homo sapiens (Human).